We begin with the raw amino-acid sequence, 100 residues long: Small ribosomal subunit protein uS14c (100 aa).

Belongs to the universal ribosomal protein uS14 family. As to quaternary structure, part of the 30S ribosomal subunit.

The protein resides in the plastid. The protein localises to the chloroplast. Its function is as follows. Binds 16S rRNA, required for the assembly of 30S particles. The polypeptide is Small ribosomal subunit protein uS14c (Stigeoclonium helveticum (Green alga)).